The sequence spans 247 residues: Ribosomal RNA small subunit methyltransferase G (247 aa).

Positions 86, 91, and 154 each coordinate S-adenosyl-L-methionine.

The protein belongs to the methyltransferase superfamily. RNA methyltransferase RsmG family.

The protein localises to the cytoplasm. Specifically methylates the N7 position of a guanine in 16S rRNA. The chain is Ribosomal RNA small subunit methyltransferase G from Leptospira biflexa serovar Patoc (strain Patoc 1 / Ames).